The chain runs to 589 residues: Aspartate--tRNA ligase (589 aa).

Glu175 is an L-aspartate binding site. Positions 199 to 202 are aspartate; sequence QIFK. Position 221 (Arg221) interacts with L-aspartate. Residues 221–223 and Gln230 contribute to the ATP site; that span reads RDE. An L-aspartate-binding site is contributed by His449. An ATP-binding site is contributed by Glu483. Arg490 lines the L-aspartate pocket. 535-538 lines the ATP pocket; it reads GLDR.

This sequence belongs to the class-II aminoacyl-tRNA synthetase family. Type 1 subfamily. Homodimer.

The protein resides in the cytoplasm. It carries out the reaction tRNA(Asp) + L-aspartate + ATP = L-aspartyl-tRNA(Asp) + AMP + diphosphate. Its function is as follows. Catalyzes the attachment of L-aspartate to tRNA(Asp) in a two-step reaction: L-aspartate is first activated by ATP to form Asp-AMP and then transferred to the acceptor end of tRNA(Asp). The chain is Aspartate--tRNA ligase from Shouchella clausii (strain KSM-K16) (Alkalihalobacillus clausii).